The chain runs to 334 residues: Glycerol-3-phosphate dehydrogenase [NAD(P)+] (334 aa).

NADPH contacts are provided by Y14 and K108. The sn-glycerol 3-phosphate site is built by K108, G140, and S142. A144 contacts NADPH. Residues K195, D248, S258, R259, and N260 each coordinate sn-glycerol 3-phosphate. Catalysis depends on K195, which acts as the Proton acceptor. Residue R259 participates in NADPH binding. Residue E285 participates in NADPH binding.

Belongs to the NAD-dependent glycerol-3-phosphate dehydrogenase family.

It is found in the cytoplasm. It carries out the reaction sn-glycerol 3-phosphate + NAD(+) = dihydroxyacetone phosphate + NADH + H(+). The catalysed reaction is sn-glycerol 3-phosphate + NADP(+) = dihydroxyacetone phosphate + NADPH + H(+). Its pathway is membrane lipid metabolism; glycerophospholipid metabolism. Its function is as follows. Catalyzes the reduction of the glycolytic intermediate dihydroxyacetone phosphate (DHAP) to sn-glycerol 3-phosphate (G3P), the key precursor for phospholipid synthesis. This is Glycerol-3-phosphate dehydrogenase [NAD(P)+] from Mesoplasma florum (strain ATCC 33453 / NBRC 100688 / NCTC 11704 / L1) (Acholeplasma florum).